We begin with the raw amino-acid sequence, 368 residues long: Methionine import ATP-binding protein MetN (368 aa).

The 256-residue stretch at 5–260 folds into the ABC transporter domain; sequence IELNNLSVQF…PKEALTKQFI (256 aa). 41–48 is a binding site for ATP; sequence GYSGAGKS.

Belongs to the ABC transporter superfamily. Methionine importer (TC 3.A.1.24) family. The complex is composed of two ATP-binding proteins (MetN), two transmembrane proteins (MetI) and a solute-binding protein (MetQ).

The protein localises to the cell membrane. It catalyses the reaction L-methionine(out) + ATP + H2O = L-methionine(in) + ADP + phosphate + H(+). It carries out the reaction D-methionine(out) + ATP + H2O = D-methionine(in) + ADP + phosphate + H(+). Functionally, part of the ABC transporter complex MetNIQ involved in methionine import. Responsible for energy coupling to the transport system. The sequence is that of Methionine import ATP-binding protein MetN from Lactococcus lactis subsp. cremoris (strain SK11).